Consider the following 30-residue polypeptide: Varv peptide G (30 aa).

A cross-link (cyclopeptide (Gly-Asn)) is located at residues 1–30 (GVPVCGETCFGGTCNTPGCSCDPWPVCSRN). Intrachain disulfides connect cysteine 5–cysteine 19, cysteine 9–cysteine 21, and cysteine 14–cysteine 27.

Post-translationally, this is a cyclic peptide.

In terms of biological role, probably participates in a plant defense mechanism. This chain is Varv peptide G, found in Viola arvensis (European field pansy).